Here is a 472-residue protein sequence, read N- to C-terminus: L-fuculokinase (472 aa).

Belongs to the FGGY kinase family. A divalent metal cation is required as a cofactor.

It carries out the reaction L-fuculose + ATP = L-fuculose 1-phosphate + ADP + H(+). The protein operates within carbohydrate degradation; L-fucose degradation; L-lactaldehyde and glycerone phosphate from L-fucose: step 2/3. Functionally, catalyzes the phosphorylation of L-fuculose. The sequence is that of L-fuculokinase from Escherichia coli O157:H7.